A 118-amino-acid polypeptide reads, in one-letter code: Large ribosomal subunit protein bL21c (118 aa).

It belongs to the bacterial ribosomal protein bL21 family. In terms of assembly, part of the 50S ribosomal subunit.

It localises to the plastid. It is found in the chloroplast. In terms of biological role, this protein binds to 23S rRNA. The sequence is that of Large ribosomal subunit protein bL21c from Anthoceros angustus (Hornwort).